Reading from the N-terminus, the 469-residue chain is MFQNADDVKKFIADEDVKFVDVRFCDLPGVMQHFTLPATAFDPDAEQAFDGSSIRGFQAIHESDMSLRPDLSTARVDPFRRDKTLNINFFIHDPITGEQYSRDPRNVAKKAEAYLASTGIADTAFFGPEAEFYVFDSVRFATRENESFYHIDSEAGAWNTGALEDNRGYKVRYKGGYFPVPPVDHFADLRAEISLELERSGLQVERQHHEVGTAGQAEINYKFNTLLAAADDLQLFKYIVKNVAWKNGKTATFMPKPIFGDNGSGMHVHQSLWSGGEPLFYDEQGYAGLSDTARYYIGGILKHAPSLLAFTNPTVNSYHRLVPGFEAPVNLVYSQRNRSAAMRIPITGSNPKAKRVEFRAPDASGNPYLAFSALLLAGLDGIKNKIEPAEPIDKDLYELAPEEHANVAQVPTSLGAVLDRLEADHEFLLQGDVFTPDLIETWIDFKRANEIAPLQLRPHPHEFEMYFDV.

The GS beta-grasp domain occupies 15 to 96 (EDVKFVDVRF…INFFIHDPIT (82 aa)). One can recognise a GS catalytic domain in the interval 104–469 (PRNVAKKAEA…PHEFEMYFDV (366 aa)). The Mg(2+) site is built by E129 and E131. Residue E205 participates in ATP binding. Positions 210 and 218 each coordinate Mg(2+). 221 to 223 (YKF) contributes to the ATP binding site. Residues 262–263 (NG) and G263 each bind L-glutamate. A Mg(2+)-binding site is contributed by H267. Residues 269–271 (HQS) and S271 each bind ATP. The L-glutamate site is built by R320, E326, and R338. Positions 338, 343, and 352 each coordinate ATP. E357 is a Mg(2+) binding site. R359 contributes to the L-glutamate binding site. Y397 is subject to O-AMP-tyrosine.

The protein belongs to the glutamine synthetase family. As to quaternary structure, oligomer of 12 subunits arranged in the form of two hexagons. Mg(2+) is required as a cofactor.

Its subcellular location is the cytoplasm. It catalyses the reaction L-glutamate + NH4(+) + ATP = L-glutamine + ADP + phosphate + H(+). The activity of this enzyme could be controlled by adenylation under conditions of abundant glutamine. Functionally, catalyzes the ATP-dependent biosynthesis of glutamine from glutamate and ammonia. Complements L-glutamine auxotrophy of an E.coli glnA mutant. The sequence is that of Glutamine synthetase from Streptomyces coelicolor (strain ATCC BAA-471 / A3(2) / M145).